We begin with the raw amino-acid sequence, 660 residues long: Bifunctional polymyxin resistance protein ArnA (660 aa).

The formyltransferase ArnAFT stretch occupies residues 1–304; the sequence is MKTVVFAYHD…TLGLVQGSRL (304 aa). 86–88 contacts (6R)-10-formyltetrahydrofolate; the sequence is HLI. His-104 acts as the Proton donor; for formyltransferase activity in catalysis. Residues Arg-114 and 136-140 each bind (6R)-10-formyltetrahydrofolate; that span reads VKRAD. The dehydrogenase ArnADH stretch occupies residues 314–660; that stretch reads RRTRVLILGV…RTVDLTDKPL (347 aa). NAD(+)-binding positions include Asp-347 and 368–369; that span reads DI. UDP-alpha-D-glucuronate is bound by residues Ala-393, Tyr-398, and 432–433; that span reads TS. Glu-434 acts as the Proton acceptor; for decarboxylase activity in catalysis. UDP-alpha-D-glucuronate contacts are provided by residues Arg-460, Asn-492, 526–535, and Tyr-613; that span reads KLIDGGKQKR. Arg-619 serves as the catalytic Proton donor; for decarboxylase activity.

The protein in the N-terminal section; belongs to the Fmt family. UDP-L-Ara4N formyltransferase subfamily. In the C-terminal section; belongs to the NAD(P)-dependent epimerase/dehydratase family. UDP-glucuronic acid decarboxylase subfamily. In terms of assembly, homohexamer, formed by a dimer of trimers.

It carries out the reaction UDP-alpha-D-glucuronate + NAD(+) = UDP-beta-L-threo-pentopyranos-4-ulose + CO2 + NADH. The enzyme catalyses UDP-4-amino-4-deoxy-beta-L-arabinose + (6R)-10-formyltetrahydrofolate = UDP-4-deoxy-4-formamido-beta-L-arabinose + (6S)-5,6,7,8-tetrahydrofolate + H(+). Its pathway is nucleotide-sugar biosynthesis; UDP-4-deoxy-4-formamido-beta-L-arabinose biosynthesis; UDP-4-deoxy-4-formamido-beta-L-arabinose from UDP-alpha-D-glucuronate: step 1/3. It functions in the pathway nucleotide-sugar biosynthesis; UDP-4-deoxy-4-formamido-beta-L-arabinose biosynthesis; UDP-4-deoxy-4-formamido-beta-L-arabinose from UDP-alpha-D-glucuronate: step 3/3. It participates in bacterial outer membrane biogenesis; lipopolysaccharide biosynthesis. In terms of biological role, bifunctional enzyme that catalyzes the oxidative decarboxylation of UDP-glucuronic acid (UDP-GlcUA) to UDP-4-keto-arabinose (UDP-Ara4O) and the addition of a formyl group to UDP-4-amino-4-deoxy-L-arabinose (UDP-L-Ara4N) to form UDP-L-4-formamido-arabinose (UDP-L-Ara4FN). The modified arabinose is attached to lipid A and is required for resistance to polymyxin and cationic antimicrobial peptides. The chain is Bifunctional polymyxin resistance protein ArnA from Escherichia coli O6:K15:H31 (strain 536 / UPEC).